The following is a 499-amino-acid chain: MTEVPWVEKYRPRKLSEIVNQEKALEQVRAWVEAWLHGNPPKKKALLLAGPPGVGKTTTVYALANEYGFEVIELNASDERTYEKIERYVQAAYTMDILGKRRKLIFLDEADNIEPSGAREIAKLIDKARNPIIMSANHYWEVPREIRNKAQIVEYKRLTQRDIIKALVRILKREGLEVPKEVLYEIAKRANGDLRAAVNDLQTVVTGGVEDAVEVLAYRDTEKSVFQALAQLFATDNAKRAKLAVLGVDMMPNELLQWIDENVPYVYYRPEDIARAYEALSRADIYLGRAQRTGNYGLWKYATDMMTAGVAVAGIKKKGFVKIYPPKTIKLLTESKEERSLRDSVIKKIMSEMHMAKLEAIETLRYLRVIFENNPDLAAHFVVFLDLSEKEVEFITGDKEKAKTIWAKSMNIEKKLKKEGELEARAKEAERRVEAAEEEETMEAGEPEEELEEVEEEELTEEELEEAEEEIETVGKKEKPEKEKTKKGKQATLFDFLKK.

Glycine 50–threonine 57 contributes to the ATP binding site. Residues glutamate 428 to lysine 499 are disordered. Residues alanine 436–glutamate 472 are compositionally biased toward acidic residues. The span at threonine 473–lysine 484 shows a compositional bias: basic and acidic residues.

Belongs to the activator 1 small subunits family. RfcL subfamily. As to quaternary structure, heteromultimer composed of small subunits (RfcS) and large subunits (RfcL).

In terms of biological role, part of the RFC clamp loader complex which loads the PCNA sliding clamp onto DNA. The chain is Replication factor C large subunit from Thermococcus kodakarensis (strain ATCC BAA-918 / JCM 12380 / KOD1) (Pyrococcus kodakaraensis (strain KOD1)).